A 451-amino-acid polypeptide reads, in one-letter code: CBL-interacting protein kinase 22 (451 aa).

A Protein kinase domain is found at 26–301 (YELGRVLGQG…IGEIFDHPWL (276 aa)). ATP is bound by residues 32–40 (LGQGASSKV) and lysine 55. The active-site Proton acceptor is aspartate 165. The activation loop stretch occupies residues 183–216 (DFGLSAFADADQHLGATDGLAATHCGSPAYVAPE). An NAF domain is found at 330 to 356 (ELEQAMELNAFDIIGFASGCDLSGLIG). The tract at residues 361–389 (RVRFVLPGGDSKSVLDKVEKLGREEGLVV) is PPI.

Belongs to the protein kinase superfamily. CAMK Ser/Thr protein kinase family. SNF1 subfamily. Mn(2+) is required as a cofactor.

It carries out the reaction L-seryl-[protein] + ATP = O-phospho-L-seryl-[protein] + ADP + H(+). The enzyme catalyses L-threonyl-[protein] + ATP = O-phospho-L-threonyl-[protein] + ADP + H(+). In terms of biological role, CIPK serine-threonine protein kinases interact with CBL proteins. Binding of a CBL protein to the regulatory NAF domain of CIPK protein lead to the activation of the kinase in a calcium-dependent manner. In Oryza sativa subsp. japonica (Rice), this protein is CBL-interacting protein kinase 22 (CIPK22).